The primary structure comprises 309 residues: Curved DNA-binding protein (309 aa).

The J domain maps to D5 to R69.

Its subcellular location is the cytoplasm. The protein localises to the nucleoid. Functionally, DNA-binding protein that preferentially recognizes a curved DNA sequence. It is probably a functional analog of DnaJ; displays overlapping activities with DnaJ, but functions under different conditions, probably acting as a molecular chaperone in an adaptive response to environmental stresses other than heat shock. Lacks autonomous chaperone activity; binds native substrates and targets them for recognition by DnaK. Its activity is inhibited by the binding of CbpM. This chain is Curved DNA-binding protein, found in Serratia proteamaculans (strain 568).